The primary structure comprises 379 residues: Succinyl-diaminopimelate desuccinylase (379 aa).

Zn(2+) is bound at residue His70. Residue Asp72 is part of the active site. Asp103 is a Zn(2+) binding site. Residue Glu137 is the Proton acceptor of the active site. The Zn(2+) site is built by Glu138, Glu166, and His352.

This sequence belongs to the peptidase M20A family. DapE subfamily. In terms of assembly, homodimer. It depends on Zn(2+) as a cofactor. Co(2+) is required as a cofactor.

The catalysed reaction is N-succinyl-(2S,6S)-2,6-diaminopimelate + H2O = (2S,6S)-2,6-diaminopimelate + succinate. The protein operates within amino-acid biosynthesis; L-lysine biosynthesis via DAP pathway; LL-2,6-diaminopimelate from (S)-tetrahydrodipicolinate (succinylase route): step 3/3. Its function is as follows. Catalyzes the hydrolysis of N-succinyl-L,L-diaminopimelic acid (SDAP), forming succinate and LL-2,6-diaminopimelate (DAP), an intermediate involved in the bacterial biosynthesis of lysine and meso-diaminopimelic acid, an essential component of bacterial cell walls. In Shewanella baltica (strain OS195), this protein is Succinyl-diaminopimelate desuccinylase.